The following is a 453-amino-acid chain: Na(+)/H(+) antiporter NhaA (453 aa).

The next 12 membrane-spanning stretches (helical) occupy residues 27 to 47, 78 to 98, 114 to 134, 143 to 163, 172 to 192, 201 to 221, 222 to 242, 249 to 269, 316 to 336, 346 to 366, 385 to 405, and 421 to 441; these read FLHI…AALM, LHFW…GMEI, ILPI…YFSF, GWAV…ALLG, IILL…IAFF, GLVI…IGFA, SAWL…VTGI, VILG…PLTI, PWVA…VSFA, FLIV…GIIT, WAGI…SIFV, and IGVL…GLIY.

It belongs to the NhaA Na(+)/H(+) (TC 2.A.33) antiporter family.

Its subcellular location is the cell inner membrane. The enzyme catalyses Na(+)(in) + 2 H(+)(out) = Na(+)(out) + 2 H(+)(in). Functionally, na(+)/H(+) antiporter that extrudes sodium in exchange for external protons. This Bartonella henselae (strain ATCC 49882 / DSM 28221 / CCUG 30454 / Houston 1) (Rochalimaea henselae) protein is Na(+)/H(+) antiporter NhaA.